Here is a 220-residue protein sequence, read N- to C-terminus: U1 small nuclear ribonucleoprotein C (220 aa).

The Matrin-type zinc-finger motif lies at 4–36; it reads FFCDYCDVYLTHDSISVRKAHNSGRNHLRNVVD. Residues 197–220 form a disordered region; it reads PLGGFPAGAPLPGAPPGYGPPGAK. A compositionally biased stretch (pro residues) spans 208 to 220; sequence PGAPPGYGPPGAK.

It belongs to the U1 small nuclear ribonucleoprotein C family. In terms of assembly, U1 snRNP is composed of the 7 core Sm proteins B/B', D1, D2, D3, E, F and G that assemble in a heptameric protein ring on the Sm site of the small nuclear RNA to form the core snRNP, and at least 3 U1 snRNP-specific proteins U1-70K, U1-A and U1-C. U1-C interacts with U1 snRNA and the 5' splice-site region of the pre-mRNA.

It is found in the nucleus. Functionally, component of the spliceosomal U1 snRNP, which is essential for recognition of the pre-mRNA 5' splice-site and the subsequent assembly of the spliceosome. U1-C is directly involved in initial 5' splice-site recognition for both constitutive and regulated alternative splicing. The interaction with the 5' splice-site seems to precede base-pairing between the pre-mRNA and the U1 snRNA. Stimulates commitment or early (E) complex formation by stabilizing the base pairing of the 5' end of the U1 snRNA and the 5' splice-site region. The protein is U1 small nuclear ribonucleoprotein C of Tuber melanosporum (strain Mel28) (Perigord black truffle).